A 1089-amino-acid chain; its full sequence is WD repeat-containing protein on Y chromosome (1089 aa).

WD repeat units lie at residues 155–199, 207–249, 329–368, 372–411, 462–501, 514–553, and 601–641; these read EEVA…IRTA, PHAV…RGPF, RIPLGVTTFFVAESHNIVVTGGPDTFVRIWDVYIPTEPSA, GHNGGIVMVFVQPEENKVYSVDYQKIIKVWNLQEHTLLQT, THAAPVSVVLYNRLFRNIVTCGLDSYIIVWDPWTGRRKII, TIDIEITAACFDPLEQFLLTGARDGSLKIWNYNNAVVIRN, and FHTD…RRYS. A disordered region spans residues 661–684; it reads KRSKRWASRAPHSGSHMMSHTGSH. The segment covering 672-684 has biased composition (low complexity); that stretch reads HSGSHMMSHTGSH. WD repeat units follow at residues 767–806 and 850–889; these read KTGDCVLTMATDRKNRFLFTGTAFGYIKVWYIVNYCIPEA and GHLKAINSISFINLPKIIITGSHDYSCRLWTQGGRYLGTL. The segment at 1049–1089 is disordered; sequence LNIKLPSRRRSDRTNDPRNMRTAKTRGDMGLGHRSSHTSQN.

This Drosophila willistoni (Fruit fly) protein is WD repeat-containing protein on Y chromosome.